The following is a 177-amino-acid chain: Transcription termination/antitermination protein NusG (177 aa).

The region spanning Pro126 to Val156 is the KOW domain.

It belongs to the NusG family.

Its function is as follows. Participates in transcription elongation, termination and antitermination. This Pseudomonas aeruginosa (strain ATCC 15692 / DSM 22644 / CIP 104116 / JCM 14847 / LMG 12228 / 1C / PRS 101 / PAO1) protein is Transcription termination/antitermination protein NusG.